Consider the following 60-residue polypeptide: MAVPKRKTSPSKRGMRRSADALKAPTYVEDKNSGELRRPHHVDLKTGMYRGRQVLEPKEA.

Over residues 1–16 (MAVPKRKTSPSKRGMR) the composition is skewed to basic residues. Positions 1–60 (MAVPKRKTSPSKRGMRRSADALKAPTYVEDKNSGELRRPHHVDLKTGMYRGRQVLEPKEA) are disordered. Residues 28 to 44 (VEDKNSGELRRPHHVDL) show a composition bias toward basic and acidic residues.

The protein belongs to the bacterial ribosomal protein bL32 family.

This is Large ribosomal subunit protein bL32 from Chelativorans sp. (strain BNC1).